A 157-amino-acid polypeptide reads, in one-letter code: 2-C-methyl-D-erythritol 2,4-cyclodiphosphate synthase (157 aa).

The a divalent metal cation site is built by D8 and H10. 4-CDP-2-C-methyl-D-erythritol 2-phosphate-binding positions include 8–10 (DVH) and 34–35 (HS). H42 provides a ligand contact to a divalent metal cation. Residues 56–58 (DIG), 61–65 (FPDTD), 100–106 (AQAPKMA), 132–135 (TTEE), F139, and R142 each bind 4-CDP-2-C-methyl-D-erythritol 2-phosphate.

The protein belongs to the IspF family. Homotrimer. The cofactor is a divalent metal cation.

It carries out the reaction 4-CDP-2-C-methyl-D-erythritol 2-phosphate = 2-C-methyl-D-erythritol 2,4-cyclic diphosphate + CMP. The protein operates within isoprenoid biosynthesis; isopentenyl diphosphate biosynthesis via DXP pathway; isopentenyl diphosphate from 1-deoxy-D-xylulose 5-phosphate: step 4/6. Its function is as follows. Involved in the biosynthesis of isopentenyl diphosphate (IPP) and dimethylallyl diphosphate (DMAPP), two major building blocks of isoprenoid compounds. Catalyzes the conversion of 4-diphosphocytidyl-2-C-methyl-D-erythritol 2-phosphate (CDP-ME2P) to 2-C-methyl-D-erythritol 2,4-cyclodiphosphate (ME-CPP) with a corresponding release of cytidine 5-monophosphate (CMP). The polypeptide is 2-C-methyl-D-erythritol 2,4-cyclodiphosphate synthase (Pseudomonas entomophila (strain L48)).